A 201-amino-acid chain; its full sequence is Adapter protein MecA 1 (201 aa).

The protein belongs to the MecA family. Homodimer.

In terms of biological role, enables the recognition and targeting of unfolded and aggregated proteins to the ClpC protease or to other proteins involved in proteolysis. Acts negatively in the development of competence by binding ComK and recruiting it to the ClpCP protease. When overexpressed, inhibits sporulation. Also involved in Spx degradation by ClpC. This chain is Adapter protein MecA 1 (mecA1), found in Halalkalibacterium halodurans (strain ATCC BAA-125 / DSM 18197 / FERM 7344 / JCM 9153 / C-125) (Bacillus halodurans).